The primary structure comprises 493 residues: Probable NADPH:adrenodoxin oxidoreductase, mitochondrial (493 aa).

FAD is bound by residues Ser26, Glu48, Leu56, and Ile100. NADP(+) contacts are provided by residues 177-180 (NGNV), 223-224 (RR), and Glu235. Residues Trp407 and 414–416 (GVI) each bind FAD. Gly414 serves as a coordination point for NADP(+).

It belongs to the ferredoxin--NADP reductase type 1 family. FAD serves as cofactor.

It is found in the mitochondrion inner membrane. The catalysed reaction is 2 reduced [adrenodoxin] + NADP(+) + H(+) = 2 oxidized [adrenodoxin] + NADPH. Adrenodoxin reductase transfers electrons from NADPH to adrenodoxin, which is involved in heme A biosynthesis and in iron-sulfur cluster assembly. Involved in the electron transfer to heme A synthase COX15, a heme protein that catalyzes the conversion of heme O to heme A. Required for the de novo synthesis of Fe-S clusters on iron sulfur cluster assembly protein ISU1. Involved in electron delivery for Fe-S cluster synthesis. Essential for coenzyme Q biosynthesis. May be involved in the electron transfer required for the hydroxylation reaction performed by COQ6. May play a role in cellular and mitochondrial iron homeostasis. The polypeptide is Probable NADPH:adrenodoxin oxidoreductase, mitochondrial (Saccharomyces cerevisiae (strain ATCC 204508 / S288c) (Baker's yeast)).